The primary structure comprises 462 residues: MAILISDVFFTIGAVLIASSYSVPQMIVGRIILGIGVGGAAVIAPLFITETAPTAVRGRCIGVNAFFIPFGQVVADAIGAGVQNVHNGWRLLFALGVVPSVLQLLLFHYLPESPRILILKGDTDRARTVFQSIYPTATRDMIDYKFRVAQEYVAATTALQSETTFWERVKKVWKTGSYRRSITTVSVLQAAGQLCGFNTLLYYAGTLFGLLGLSNPALGGLIPAGTNAVFVLIGMSLVDKVGRRGLMLFGVPIMLLGLVWNIIGFYYLCKPTGGFLDTSYSYDTTNVGVVIGGIVFFVVGYGLTYSHLVWYQAEYLALEVRSMGSGVATTVCWIANLVVSVSYLSELETMTPSGTYGFYLGLSVIGFAFVVFCFPETKQLSIDETSLLFENDWGVKRSVQMRKERRETRKRFQDAELAEAATAHLEARQQKSTSVSPAELSKFMAGLKGNKRKPSVLVKTAT.

10 consecutive transmembrane segments (helical) span residues 1 to 21 (MAILISDVFFTIGAVLIASSY), 31 to 51 (IILGIGVGGAAVIAPLFITET), 61 to 81 (IGVNAFFIPFGQVVADAIGAG), 91 to 111 (LLFALGVVPSVLQLLLFHYLP), 194 to 214 (LCGFNTLLYYAGTLFGLLGLS), 218 to 238 (LGGLIPAGTNAVFVLIGMSLV), 245 to 265 (GLMLFGVPIMLLGLVWNIIGF), 289 to 309 (VVIGGIVFFVVGYGLTYSHLV), 324 to 344 (GSGVATTVCWIANLVVSVSYL), and 354 to 374 (GTYGFYLGLSVIGFAFVVFCF).

This sequence belongs to the major facilitator superfamily. Sugar transporter (TC 2.A.1.1) family.

The protein localises to the cell membrane. It catalyses the reaction myo-inositol(out) + H(+)(out) = myo-inositol(in) + H(+)(in). Functionally, transporter for myo-inositol. This is Myo-inositol transporter 3B from Cryptococcus neoformans var. grubii serotype A (strain H99 / ATCC 208821 / CBS 10515 / FGSC 9487) (Filobasidiella neoformans var. grubii).